We begin with the raw amino-acid sequence, 116 residues long: MKTIIVFLSLLVLATKFGDANEGVNQEQMKEVIQNEFREDFLNEMAPMSLLQQLEAIESTLLEKEADRNSRQKRCNGKNVPCGSNHSPCCSGLSCEETFGYGWLYKSPYCVIPSNG.

The signal sequence occupies residues 1–20; the sequence is MKTIIVFLSLLVLATKFGDA. Positions 21–76 are excised as a propeptide; that stretch reads NEGVNQEQMKEVIQNEFREDFLNEMAPMSLLQQLEAIESTLLEKEADRNSRQKRCN. 3 disulfides stabilise this stretch: Cys75/Cys90, Cys82/Cys95, and Cys89/Cys110.

This sequence belongs to the neurotoxin 14 (magi-1) family. 06 (ICK-Trit) subfamily. Expressed by the venom gland.

The protein localises to the secreted. Its function is as follows. Ion channel inhibitor. The protein is U16-barytoxin-Tl1c of Trittame loki (Brush-footed trapdoor spider).